Reading from the N-terminus, the 324-residue chain is Probable pectinesterase A (324 aa).

A signal peptide spans 1–19; the sequence is MYLPSLVLGLLGFGLTAST. A glycan (N-linked (GlcNAc...) asparagine) is linked at Asn-27. Gln-142 contacts substrate. Asp-165 functions as the Proton donor in the catalytic mechanism. Residue Asp-186 is the Nucleophile of the active site. Substrate contacts are provided by Arg-246 and Trp-248.

Belongs to the pectinesterase family.

The protein localises to the secreted. It carries out the reaction [(1-&gt;4)-alpha-D-galacturonosyl methyl ester](n) + n H2O = [(1-&gt;4)-alpha-D-galacturonosyl](n) + n methanol + n H(+). It functions in the pathway glycan metabolism; pectin degradation; 2-dehydro-3-deoxy-D-gluconate from pectin: step 1/5. Involved in maceration and soft-rotting of plant tissue. The sequence is that of Probable pectinesterase A (pmeA) from Aspergillus fumigatus (strain CBS 144.89 / FGSC A1163 / CEA10) (Neosartorya fumigata).